We begin with the raw amino-acid sequence, 81 residues long: Three-finger toxin MALT0051C (81 aa).

The signal sequence occupies residues 1–21 (MKTLLLTLVVVTVVCLDFGHT). 4 disulfide bridges follow: cysteine 24/cysteine 43, cysteine 38/cysteine 60, cysteine 62/cysteine 73, and cysteine 74/cysteine 79.

The protein belongs to the three-finger toxin family. Short-chain subfamily. Type I alpha-neurotoxin sub-subfamily. In terms of tissue distribution, expressed by the venom gland.

It is found in the secreted. In terms of biological role, binds to muscle nicotinic acetylcholine receptor (nAChR) and inhibit acetylcholine from binding to the receptor, thereby impairing neuromuscular transmission. The sequence is that of Three-finger toxin MALT0051C from Micrurus altirostris (Uruguayan coral snake).